The sequence spans 21 residues: VTVYDAEGTKVQVDGSLRLVE.

Disulfide bond interactions within and between MOMP molecules and other components form high molecular-weight oligomers.

The protein localises to the cell outer membrane. In terms of biological role, structural rigidity of the outer membrane of elementary bodies and porin forming, permitting diffusion of solutes through the intracellular reticulate body membrane. The sequence is that of Major outer membrane protein from Actinobacillus suis.